The primary structure comprises 152 residues: Small ribosomal subunit protein uS13 (152 aa).

S41 is modified (phosphoserine).

Belongs to the universal ribosomal protein uS13 family.

It is found in the cytoplasm. Its function is as follows. Located at the top of the head of the 40S subunit, it contacts several helices of the 18S rRNA. The sequence is that of Small ribosomal subunit protein uS13 (RpS18) from Drosophila melanogaster (Fruit fly).